The sequence spans 265 residues: Cell adhesion molecule CEACAM7 (265 aa).

The signal sequence occupies residues 1–35; it reads MGSPSACPYRVCIPWQGLLLTASLLTFWNLPNSAQ. Positions 36 to 142 constitute an Ig-like V-type domain; that stretch reads TNIDVVPFNV…EEVTRQFYVF (107 aa). N-linked (GlcNAc...) asparagine glycans are attached at residues asparagine 57, asparagine 85, asparagine 105, asparagine 112, asparagine 174, asparagine 183, and asparagine 198. The region spanning 146–233 is the Ig-like C2-type domain; sequence PKPSITSNNF…ASRSDPVTLN (88 aa). An intrachain disulfide couples cysteine 168 to cysteine 216. A lipid anchor (GPI-anchor amidated serine) is attached at serine 242. Positions 243 to 265 are cleaved as a propeptide — removed in mature form; the sequence is SPDLSAGTAVSIMIGVLAGMALI.

Belongs to the immunoglobulin superfamily. CEA family. As to quaternary structure, homodimer. In terms of tissue distribution, expressed in columnar epithelial cells of the colon (at protein level). Strongly down-regulated in colonic adenocarcinomas.

The protein localises to the cell membrane. It localises to the apical cell membrane. The chain is Cell adhesion molecule CEACAM7 from Homo sapiens (Human).